The following is a 248-amino-acid chain: Adenosylcobinamide-GDP ribazoletransferase (248 aa).

8 helical membrane-spanning segments follow: residues 3 to 23, 35 to 55, 63 to 83, 109 to 129, 135 to 155, 180 to 199, 200 to 219, and 228 to 248; these read ELKA…PINI, SYFP…YLLL, IVMT…HIDG, LGTN…LFLS, LLFS…VFSI, FVIA…PLKD, LALL…KYIS, and DTLG…FSIL.

Belongs to the CobS family. Mg(2+) serves as cofactor.

Its subcellular location is the cell membrane. It carries out the reaction alpha-ribazole + adenosylcob(III)inamide-GDP = adenosylcob(III)alamin + GMP + H(+). The enzyme catalyses alpha-ribazole 5'-phosphate + adenosylcob(III)inamide-GDP = adenosylcob(III)alamin 5'-phosphate + GMP + H(+). It functions in the pathway cofactor biosynthesis; adenosylcobalamin biosynthesis; adenosylcobalamin from cob(II)yrinate a,c-diamide: step 7/7. Functionally, joins adenosylcobinamide-GDP and alpha-ribazole to generate adenosylcobalamin (Ado-cobalamin). Also synthesizes adenosylcobalamin 5'-phosphate from adenosylcobinamide-GDP and alpha-ribazole 5'-phosphate. The chain is Adenosylcobinamide-GDP ribazoletransferase from Caldanaerobacter subterraneus subsp. tengcongensis (strain DSM 15242 / JCM 11007 / NBRC 100824 / MB4) (Thermoanaerobacter tengcongensis).